Here is a 98-residue protein sequence, read N- to C-terminus: NADH-ubiquinone oxidoreductase chain 4L (98 aa).

3 consecutive transmembrane segments (helical) span residues M1–I21, S29–L49, and V61–I81.

Belongs to the complex I subunit 4L family. In terms of assembly, core subunit of respiratory chain NADH dehydrogenase (Complex I) which is composed of 45 different subunits.

The protein localises to the mitochondrion inner membrane. The enzyme catalyses a ubiquinone + NADH + 5 H(+)(in) = a ubiquinol + NAD(+) + 4 H(+)(out). In terms of biological role, core subunit of the mitochondrial membrane respiratory chain NADH dehydrogenase (Complex I) which catalyzes electron transfer from NADH through the respiratory chain, using ubiquinone as an electron acceptor. Part of the enzyme membrane arm which is embedded in the lipid bilayer and involved in proton translocation. This Hylobates lar (Lar gibbon) protein is NADH-ubiquinone oxidoreductase chain 4L (MT-ND4L).